The primary structure comprises 375 residues: MFLRSVQLHDFRNYAEADLELTSPKTILVGDNAQGKSNLLEAVQLLATGRSTRALRDRELIARGKEQARVAATVERLGDTVELEMILRAGKRRTVRVGGETRRTQVEALGYLHCVSFSSLDLDLVRGAPETRRDWLDGILLQLEPVYTNVLAQFVQALHQRNALLRSTELSPDALAEQLPCWDDLLVRAATPVMRRRHRLIERLAPLARRWHGSISGGRETFAVRYQPQISFEQEDAQSVQQALQELLKEKRTLEGRRGTSLVGPHRDEVDLSIDEIPARQFGSQGQQRTLVLALKLAELELLEQVTGEVPLLLLDDVLAELDLHRQDQLLGAIQERVQTIVTTTHLSLFDSQWLQSATVLTIEKGRIGSPPAPA.

30 to 37 (GDNAQGKS) serves as a coordination point for ATP.

It belongs to the RecF family.

The protein resides in the cytoplasm. In terms of biological role, the RecF protein is involved in DNA metabolism; it is required for DNA replication and normal SOS inducibility. RecF binds preferentially to single-stranded, linear DNA. It also seems to bind ATP. The protein is DNA replication and repair protein RecF of Gloeobacter violaceus (strain ATCC 29082 / PCC 7421).